Reading from the N-terminus, the 180-residue chain is Nucleoside-triphosphatase THEP1 (180 aa).

ATP is bound by residues 18 to 25 (GRPGVGKT) and 104 to 111 (LVIMDEIG).

This sequence belongs to the THEP1 NTPase family.

The enzyme catalyses a ribonucleoside 5'-triphosphate + H2O = a ribonucleoside 5'-diphosphate + phosphate + H(+). Its function is as follows. Has nucleotide phosphatase activity towards ATP, GTP, CTP, TTP and UTP. May hydrolyze nucleoside diphosphates with lower efficiency. This Metallosphaera sedula (strain ATCC 51363 / DSM 5348 / JCM 9185 / NBRC 15509 / TH2) protein is Nucleoside-triphosphatase THEP1.